We begin with the raw amino-acid sequence, 276 residues long: Diaminopimelate epimerase (276 aa).

The substrate site is built by asparagine 13, glutamine 46, and asparagine 66. Cysteine 75 (proton donor) is an active-site residue. Substrate-binding positions include 76–77 (GN), asparagine 159, asparagine 192, and 210–211 (ER). Cysteine 219 serves as the catalytic Proton acceptor. Substrate is bound at residue 220–221 (GS).

Belongs to the diaminopimelate epimerase family. Homodimer.

It is found in the cytoplasm. It carries out the reaction (2S,6S)-2,6-diaminopimelate = meso-2,6-diaminopimelate. Its pathway is amino-acid biosynthesis; L-lysine biosynthesis via DAP pathway; DL-2,6-diaminopimelate from LL-2,6-diaminopimelate: step 1/1. Catalyzes the stereoinversion of LL-2,6-diaminopimelate (L,L-DAP) to meso-diaminopimelate (meso-DAP), a precursor of L-lysine and an essential component of the bacterial peptidoglycan. The protein is Diaminopimelate epimerase of Vibrio atlanticus (strain LGP32) (Vibrio splendidus (strain Mel32)).